Reading from the N-terminus, the 411-residue chain is Tyrosine--tRNA ligase (411 aa).

Tyr34 is an L-tyrosine binding site. The 'HIGH' region motif lies at 39–48; sequence CTATSLHIGS. L-tyrosine-binding residues include Tyr171 and Gln175. The 'KMSKS' region motif lies at 231–235; that stretch reads KMGKT. Residue Lys234 participates in ATP binding. The 67-residue stretch at 345 to 411 folds into the S4 RNA-binding domain; it reads ISAYNLFYNA…GKKRHILVKV (67 aa).

Belongs to the class-I aminoacyl-tRNA synthetase family. TyrS type 1 subfamily. In terms of assembly, homodimer.

Its subcellular location is the cytoplasm. It carries out the reaction tRNA(Tyr) + L-tyrosine + ATP = L-tyrosyl-tRNA(Tyr) + AMP + diphosphate + H(+). In terms of biological role, catalyzes the attachment of tyrosine to tRNA(Tyr) in a two-step reaction: tyrosine is first activated by ATP to form Tyr-AMP and then transferred to the acceptor end of tRNA(Tyr). In Rickettsia prowazekii (strain Madrid E), this protein is Tyrosine--tRNA ligase.